The following is a 406-amino-acid chain: Sensor histidine kinase YxjM (406 aa).

The Cytoplasmic segment spans residues 1–13; sequence MNGQTPARHYYKK. The helical transmembrane segment at 14–34 threads the bilayer; it reads LVPSLILILNCIQFLSHPTKA. The Extracellular portion of the chain corresponds to 35-36; the sequence is DP. The chain crosses the membrane as a helical span at residues 37-57; it reads ILLAFVFAVYLAFIWIIPYVA. Residue S58 is a topological domain, cytoplasmic. 2 helical membrane passes run 59–79 and 80–100; these read TAVS…FWAV and SGQE…YAAF. A topological domain (cytoplasmic) is located at residue R101. A helical transmembrane segment spans residues 102 to 122; sequence LPSRLSLIFTACLIGGNILLL. Residues 123–125 are Extracellular-facing; it reads SSQ. A helical transmembrane segment spans residues 126 to 146; sequence GGSLNTIISNISIMLGLYVLF. The Cytoplasmic segment spans residues 147–406; sequence SSMRFRREAR…TNKEQKDEQR (260 aa). The Histidine kinase domain maps to 209–396; it reads DIHDSIGHEL…KIELSLPLMT (188 aa). A Phosphohistidine; by autocatalysis modification is found at H211.

It localises to the cell membrane. The enzyme catalyses ATP + protein L-histidine = ADP + protein N-phospho-L-histidine.. Functionally, probable member of the two-component regulatory system YxjM/YxjL. May activate YxjL by phosphorylation. In Bacillus subtilis (strain 168), this protein is Sensor histidine kinase YxjM (yxjM).